We begin with the raw amino-acid sequence, 319 residues long: Aspartate carbamoyltransferase catalytic subunit (319 aa).

2 residues coordinate carbamoyl phosphate: arginine 65 and threonine 66. Lysine 93 serves as a coordination point for L-aspartate. The carbamoyl phosphate site is built by arginine 115, histidine 149, and glutamine 152. L-aspartate is bound by residues arginine 182 and arginine 237. Carbamoyl phosphate-binding residues include glycine 278 and proline 279.

It belongs to the aspartate/ornithine carbamoyltransferase superfamily. ATCase family. Heterododecamer (2C3:3R2) of six catalytic PyrB chains organized as two trimers (C3), and six regulatory PyrI chains organized as three dimers (R2).

It catalyses the reaction carbamoyl phosphate + L-aspartate = N-carbamoyl-L-aspartate + phosphate + H(+). The protein operates within pyrimidine metabolism; UMP biosynthesis via de novo pathway; (S)-dihydroorotate from bicarbonate: step 2/3. In terms of biological role, catalyzes the condensation of carbamoyl phosphate and aspartate to form carbamoyl aspartate and inorganic phosphate, the committed step in the de novo pyrimidine nucleotide biosynthesis pathway. This is Aspartate carbamoyltransferase catalytic subunit from Janthinobacterium sp. (strain Marseille) (Minibacterium massiliensis).